The primary structure comprises 93 residues: MSESSARTEMKISLPENLVAELDGVAMREKRSRNELISQAVRAYVSERTTRHNRDLMRRGYMEMAKINLNISSEAHFAECEAETTVERLVSGG.

It belongs to the MazE/EndoAI family. Homodimer, forms a heterohexamer composed of alternating toxin and antitoxin homodimers which inhibits the toxin's endoribonuclease activity. Antitoxin prevents RNA binding to the endoribonuclease.

Functionally, antitoxin component of a type II toxin-antitoxin (TA) system. Antitoxin that directly inhibits activity of EndoA in vitro. Upon expression in E.coli counteracts inhibitory effect of endoribonuclease EndoA. The EndoA-EndoAI complex does not seem to bind its own promoter. The polypeptide is Antitoxin EndoAI (Bacillus subtilis (strain 168)).